A 313-amino-acid polypeptide reads, in one-letter code: Porphobilinogen deaminase (313 aa).

Cys-242 is subject to S-(dipyrrolylmethanemethyl)cysteine.

The protein belongs to the HMBS family. In terms of assembly, monomer. Dipyrromethane is required as a cofactor.

It catalyses the reaction 4 porphobilinogen + H2O = hydroxymethylbilane + 4 NH4(+). It functions in the pathway porphyrin-containing compound metabolism; protoporphyrin-IX biosynthesis; coproporphyrinogen-III from 5-aminolevulinate: step 2/4. Tetrapolymerization of the monopyrrole PBG into the hydroxymethylbilane pre-uroporphyrinogen in several discrete steps. In Proteus mirabilis (strain HI4320), this protein is Porphobilinogen deaminase.